The chain runs to 308 residues: Cytochrome b (308 aa).

Transmembrane regions (helical) follow at residues 1–21 (FGSL…LMAM), 45–66 (WLIR…YLHI), 81–101 (WNTG…GYVL), and 146–166 (FFAL…IHLT). Heme b contacts are provided by histidine 51 and histidine 65. Residues histidine 150 and histidine 164 each contribute to the heme b site. An a ubiquinone-binding site is contributed by histidine 169. A run of 3 helical transmembrane segments spans residues 194 to 214 (TKDI…AMFS), 256 to 276 (LGGV…PFLH), and 288 to 308 (LSQL…WVGS).

It belongs to the cytochrome b family. In terms of assembly, the cytochrome bc1 complex contains 11 subunits: 3 respiratory subunits (MT-CYB, CYC1 and UQCRFS1), 2 core proteins (UQCRC1 and UQCRC2) and 6 low-molecular weight proteins (UQCRH/QCR6, UQCRB/QCR7, UQCRQ/QCR8, UQCR10/QCR9, UQCR11/QCR10 and a cleavage product of UQCRFS1). This cytochrome bc1 complex then forms a dimer. The cofactor is heme b.

The protein resides in the mitochondrion inner membrane. Its function is as follows. Component of the ubiquinol-cytochrome c reductase complex (complex III or cytochrome b-c1 complex) that is part of the mitochondrial respiratory chain. The b-c1 complex mediates electron transfer from ubiquinol to cytochrome c. Contributes to the generation of a proton gradient across the mitochondrial membrane that is then used for ATP synthesis. This is Cytochrome b (MT-CYB) from Asthenes dorbignyi (Creamy-breasted canastero).